Reading from the N-terminus, the 348-residue chain is 3',5'-cyclic-nucleotide phosphodiesterase (348 aa).

The cofactor is Mn(2+).

It catalyses the reaction a nucleoside 3',5'-cyclic phosphate + H2O = a nucleoside 5'-phosphate + H(+). Functionally, hydrolyzes cAMP to 5'-AMP and cGMP to 5'-GMP. Does not show phosphohydrolase activity toward various phosphatidylcholine and phosphorylated sugars. The protein is 3',5'-cyclic-nucleotide phosphodiesterase of Helicobacter pylori (strain ATCC 700392 / 26695) (Campylobacter pylori).